We begin with the raw amino-acid sequence, 127 residues long: Small ribosomal subunit protein eS6 (127 aa).

This sequence belongs to the eukaryotic ribosomal protein eS6 family.

This Picrophilus torridus (strain ATCC 700027 / DSM 9790 / JCM 10055 / NBRC 100828 / KAW 2/3) protein is Small ribosomal subunit protein eS6.